Reading from the N-terminus, the 267-residue chain is Protein I267L (267 aa).

This sequence belongs to the asfivirus I267L family.

The sequence is that of Protein I267L from African swine fever virus (isolate Warthog/Namibia/Wart80/1980) (ASFV).